The chain runs to 367 residues: UDP-N-acetylenolpyruvoylglucosamine reductase (367 aa).

Positions 29 to 205 constitute an FAD-binding PCMH-type domain; the sequence is VGPVAQRVIT…LEVEFKLDAS (177 aa). R177 is a catalytic residue. Catalysis depends on S260, which acts as the Proton donor. The active site involves E359.

The protein belongs to the MurB family. It depends on FAD as a cofactor.

The protein resides in the cytoplasm. It catalyses the reaction UDP-N-acetyl-alpha-D-muramate + NADP(+) = UDP-N-acetyl-3-O-(1-carboxyvinyl)-alpha-D-glucosamine + NADPH + H(+). The protein operates within cell wall biogenesis; peptidoglycan biosynthesis. Its function is as follows. Cell wall formation. The sequence is that of UDP-N-acetylenolpyruvoylglucosamine reductase from Mycobacterium leprae (strain Br4923).